Reading from the N-terminus, the 322-residue chain is Peroxisomal adenine nucleotide carrier 1 (322 aa).

Solcar repeat units follow at residues 5 to 94, 104 to 184, and 202 to 298; these read LESV…FKRV, IGTK…LKQH, and LSAF…ITAT. Helical transmembrane passes span 8–28, 104–124, 158–178, 201–221, 254–274, and 286–306; these read VSEA…LYPL, IGTK…SVLI, FDGL…YTVF, VLSA…ATVL, IPGV…FKGL, and ALLL…ILAI.

Belongs to the mitochondrial carrier (TC 2.A.29) family. In terms of tissue distribution, expressed in stamens, pollen grains, seeds, leaves, cotyledons, roots, stems, flowers, hypocotyls and siliques.

It is found in the peroxisome membrane. Its function is as follows. Peroxisomal adenine nucleotide transporter catalyzing the counterexchange of ATP with AMP. ATP is needed by reactions that generate acyl-CoA for peroxisomal fatty acid beta-oxidation during postgerminative growth. Required for the beta-oxidation reactions involved in auxin biosynthesis and for the conversion of seed-reserved triacylglycerols into sucrose that is necessary for growth before the onset of photosynthesis. This chain is Peroxisomal adenine nucleotide carrier 1 (PNC1), found in Arabidopsis thaliana (Mouse-ear cress).